We begin with the raw amino-acid sequence, 177 residues long: MSRIGKKPVTVPSGVTATVDGQTVKMKGPKGQLQFLVHDDVEVKFENGQVKVAPRAETKRARSLYGTARAQIANLVEGVTKGFEKKLEITGVGYRAAMQGKNLQLALGYSHDVVYQIPEGITIAVPKPTEITITGIDPQRVGQVAAEIRAYRPPEPYKGKGVKYAGEFIFRKEGKKK.

This sequence belongs to the universal ribosomal protein uL6 family. As to quaternary structure, part of the 50S ribosomal subunit.

This protein binds to the 23S rRNA, and is important in its secondary structure. It is located near the subunit interface in the base of the L7/L12 stalk, and near the tRNA binding site of the peptidyltransferase center. In Bradyrhizobium sp. (strain ORS 278), this protein is Large ribosomal subunit protein uL6.